A 426-amino-acid polypeptide reads, in one-letter code: Target of rapamycin complex 2 subunit AVO2 (426 aa).

ANK repeat units lie at residues 4–33 (EPSV…DLLT), 39–68 (NGWS…DKHE), 74–104 (KGNT…FINH), 108–137 (NGRA…DLWV), and 141–171 (NGDT…SLDD). Residues 259–302 (STHTTSGNGGNRRSSITNPVFNPRKPTLSTDSFSSSSNSSSRLR) form a disordered region. Over residues 260–278 (THTTSGNGGNRRSSITNPV) the composition is skewed to polar residues. Residues 285 to 302 (TLSTDSFSSSSNSSSRLR) show a composition bias toward low complexity. S315 and S350 each carry phosphoserine. Over residues 350-359 (SNDNVRGDSQ) the composition is skewed to polar residues. Residues 350 to 392 (SNDNVRGDSQTATINDDGGGGNGGDATIGMGLRKDPDDENENK) are disordered. Over residues 366-375 (DGGGGNGGDA) the composition is skewed to gly residues. Over residues 381–392 (LRKDPDDENENK) the composition is skewed to basic and acidic residues.

In terms of assembly, the target of rapamycin complex 2 (TORC2) is composed of at least AVO1, AVO2, BIT61, LST8, TOR2 and TSC11. TORC2 forms a homodimer. Contrary to TORC1, TORC2 does not bind to and is not sensitive to FKBP-rapamycin. AVO2 is peripherally associated to AVO1 and TSC11.

The protein resides in the cell membrane. The protein localises to the vacuole membrane. In terms of biological role, component of TORC2, which regulates cell cycle-dependent polarization of the actin-cytoskeleton and cell wall integrity. TORC2 controls polarity of the actin cytoskeleton, which is required for orienting the secretory pathway toward discrete growth sites, via the RHO1/PKC1/MAPK cell integrity pathway. The chain is Target of rapamycin complex 2 subunit AVO2 (AVO2) from Saccharomyces cerevisiae (strain ATCC 204508 / S288c) (Baker's yeast).